The primary structure comprises 393 residues: UDP-N-acetylglucosamine--N-acetylmuramyl-(pentapeptide) pyrophosphoryl-undecaprenol N-acetylglucosamine transferase (393 aa).

Residues 15–17 (TAG), N129, R171, S211, and Q322 contribute to the UDP-N-acetyl-alpha-D-glucosamine site.

This sequence belongs to the glycosyltransferase 28 family. MurG subfamily.

It is found in the cell membrane. The enzyme catalyses di-trans,octa-cis-undecaprenyl diphospho-N-acetyl-alpha-D-muramoyl-L-alanyl-D-glutamyl-meso-2,6-diaminopimeloyl-D-alanyl-D-alanine + UDP-N-acetyl-alpha-D-glucosamine = di-trans,octa-cis-undecaprenyl diphospho-[N-acetyl-alpha-D-glucosaminyl-(1-&gt;4)]-N-acetyl-alpha-D-muramoyl-L-alanyl-D-glutamyl-meso-2,6-diaminopimeloyl-D-alanyl-D-alanine + UDP + H(+). It functions in the pathway cell wall biogenesis; peptidoglycan biosynthesis. Functionally, cell wall formation. Catalyzes the transfer of a GlcNAc subunit on undecaprenyl-pyrophosphoryl-MurNAc-pentapeptide (lipid intermediate I) to form undecaprenyl-pyrophosphoryl-MurNAc-(pentapeptide)GlcNAc (lipid intermediate II). The sequence is that of UDP-N-acetylglucosamine--N-acetylmuramyl-(pentapeptide) pyrophosphoryl-undecaprenol N-acetylglucosamine transferase from Bifidobacterium longum (strain DJO10A).